The primary structure comprises 410 residues: E3 ubiquitin-protein ligase ICP0 (410 aa).

The segment at 46 to 85 adopts an RING-type zinc-finger fold; sequence CPICLDVAATEAQTLPCMHKFCLDCIQRWTLTSTACPLCN. The segment at 243-410 is disordered; sequence TSESEAHSDS…IFIDLTQDDD (168 aa). Basic residues predominate over residues 287–315; the sequence is APRRSPRRARRAAVLRREQRRTRCLRRGR. Composition is skewed to low complexity over residues 329-340 and 348-399; these read SSGEGSSAQHGA and GSAN…PRSA.

In terms of processing, auto-ubiquitinated.

It catalyses the reaction S-ubiquitinyl-[E2 ubiquitin-conjugating enzyme]-L-cysteine + [acceptor protein]-L-lysine = [E2 ubiquitin-conjugating enzyme]-L-cysteine + N(6)-ubiquitinyl-[acceptor protein]-L-lysine.. Evades nuclear antiviral defenses triggered by dsDNA viruses. Acts during the initial stages of lytic infection and the reactivation of latent viral genome. Prevents the antiviral effect of nuclear bodies by degrading host PML and SP100. This Sus scrofa (Pig) protein is E3 ubiquitin-protein ligase ICP0 (EP0).